A 241-amino-acid chain; its full sequence is Uridylate kinase (241 aa).

Residue 12–15 (KLSG) participates in ATP binding. The tract at residues 20–25 (GDKGTG) is involved in allosteric activation by GTP. Gly-54 provides a ligand contact to UMP. The ATP site is built by Gly-55 and Arg-59. Residues Asp-74 and 135 to 142 (TGSPYFST) each bind UMP. Residues Asn-163, Tyr-169, and Asp-172 each coordinate ATP.

Belongs to the UMP kinase family. In terms of assembly, homohexamer.

Its subcellular location is the cytoplasm. It carries out the reaction UMP + ATP = UDP + ADP. It functions in the pathway pyrimidine metabolism; CTP biosynthesis via de novo pathway; UDP from UMP (UMPK route): step 1/1. Allosterically activated by GTP. Inhibited by UTP. Functionally, catalyzes the reversible phosphorylation of UMP to UDP. In Pediococcus pentosaceus (strain ATCC 25745 / CCUG 21536 / LMG 10740 / 183-1w), this protein is Uridylate kinase.